The primary structure comprises 142 residues: Alpha-lactalbumin (142 aa).

The signal sequence occupies residues 1 to 19 (MMSFVSLLLVGILFHATQA). Positions 20-142 (EQLTKCEVFR…KLDQWLCEKL (123 aa)) constitute a C-type lysozyme domain. 4 cysteine pairs are disulfide-bonded: cysteine 25/cysteine 139, cysteine 47/cysteine 130, cysteine 80/cysteine 96, and cysteine 92/cysteine 110. Asparagine 64 carries an N-linked (GlcNAc...) asparagine glycan. Lysine 98, aspartate 101, aspartate 103, aspartate 106, and aspartate 107 together coordinate Ca(2+).

The protein belongs to the glycosyl hydrolase 22 family. In terms of assembly, lactose synthase (LS) is a heterodimer of a catalytic component, beta1,4-galactosyltransferase (beta4Gal-T1) and a regulatory component, alpha-lactalbumin (LA). As to expression, mammary gland specific. Secreted in milk.

The protein resides in the secreted. Functionally, regulatory subunit of lactose synthase, changes the substrate specificity of galactosyltransferase in the mammary gland making glucose a good acceptor substrate for this enzyme. This enables LS to synthesize lactose, the major carbohydrate component of milk. In other tissues, galactosyltransferase transfers galactose onto the N-acetylglucosamine of the oligosaccharide chains in glycoproteins. The chain is Alpha-lactalbumin (LALBA) from Bos taurus (Bovine).